A 195-amino-acid polypeptide reads, in one-letter code: Putative manganese efflux pump MntP (195 aa).

6 consecutive transmembrane segments (helical) span residues 4–24, 39–59, 64–84, 120–140, 145–165, and 175–195; these read ILIT…SLAM, FVLT…NLGL, FLGV…GWQM, ILLL…TLGT, ILIT…VGFA, and GSYA…KFVV.

This sequence belongs to the MntP (TC 9.B.29) family.

It is found in the cell membrane. In terms of biological role, probably functions as a manganese efflux pump. The chain is Putative manganese efflux pump MntP from Syntrophomonas wolfei subsp. wolfei (strain DSM 2245B / Goettingen).